Consider the following 158-residue polypeptide: MSGAVCPGSFDPVTLGHVDIFERAAAQFDEVVVAVLVNPNKKGMFTLDERMEMIAESCAHLPNLRVESGQGLVVDFVRARGYSAIVKGLRSSTDFEYELQMAQMNKHVAGVDTFFIASAPSYSFVSSSLAKEVATLGGDVSALLPDAVNVRLQAKLRG.

Serine 9 contributes to the substrate binding site. ATP is bound by residues 9–10 (SF) and histidine 17. Substrate-binding residues include lysine 41, valine 73, and lysine 87. ATP contacts are provided by residues 88–90 (GLR), glutamate 98, and 122–128 (YSFVSSS).

The protein belongs to the bacterial CoaD family. As to quaternary structure, homohexamer. The cofactor is Mg(2+).

It localises to the cytoplasm. The catalysed reaction is (R)-4'-phosphopantetheine + ATP + H(+) = 3'-dephospho-CoA + diphosphate. The protein operates within cofactor biosynthesis; coenzyme A biosynthesis; CoA from (R)-pantothenate: step 4/5. Reversibly transfers an adenylyl group from ATP to 4'-phosphopantetheine, yielding dephospho-CoA (dPCoA) and pyrophosphate. The polypeptide is Phosphopantetheine adenylyltransferase (Mycobacterium sp. (strain JLS)).